The primary structure comprises 655 residues: Bifunctional lysine-specific demethylase and histidyl-hydroxylase NO66 (655 aa).

Polar residues predominate over residues 1 to 16 (MEKVTNSAAAKPQGNN). Disordered regions lie at residues 1–48 (MEKV…LSDM) and 67–122 (EDTD…QGAS). A compositionally biased stretch (low complexity) spans 76 to 86 (STSSKEAAAAK). Positions 87–96 (TADHERRLQA) are enriched in basic and acidic residues. Serine 131 bears the Phosphoserine mark. Phosphothreonine is present on threonine 137. A Phosphoserine modification is found at serine 138. Residues 185 to 210 (KAPEEGNNNNDEKEMSTETSEPHKTD) are disordered. The span at 194–210 (NDEKEMSTETSEPHKTD) shows a compositional bias: basic and acidic residues. The 146-residue stretch at 307–452 (CSIRLLHASA…NLLETLMPMV (146 aa)) folds into the JmjC domain. Positions 353, 355, and 418 each coordinate Fe cation.

It belongs to the ROX family. NO66 subfamily. The cofactor is Fe(2+).

The protein resides in the nucleus. It catalyses the reaction N(6),N(6)-dimethyl-L-lysyl(36)-[histone H3] + 2 2-oxoglutarate + 2 O2 = L-lysyl(36)-[histone H3] + 2 formaldehyde + 2 succinate + 2 CO2. Its function is as follows. Oxygenase that can act as both a histone lysine demethylase and a ribosomal histidine hydroxylase. Specifically demethylates 'Lys-4' (H3K4me) and 'Lys-36' (H3K36me) of histone H3, thereby playing a central role in histone code. The sequence is that of Bifunctional lysine-specific demethylase and histidyl-hydroxylase NO66 from Drosophila sechellia (Fruit fly).